Reading from the N-terminus, the 191-residue chain is Recombination protein RecR (191 aa).

The C4-type zinc finger occupies 56–71 (CQNCNFLQSNNICHFC). One can recognise a Toprim domain in the interval 78–170 (KQLMIFETTS…KVTKLAQGLP (93 aa)).

The protein belongs to the RecR family.

May play a role in DNA repair. It seems to be involved in an RecBC-independent recombinational process of DNA repair. It may act with RecF and RecO. This chain is Recombination protein RecR, found in Mycoplasmopsis pulmonis (strain UAB CTIP) (Mycoplasma pulmonis).